The chain runs to 398 residues: Succinate--CoA ligase [ADP-forming] subunit beta (398 aa).

The 245-residue stretch at 9-253 (KELLKSYGVA…EAEEDPKELE (245 aa)) folds into the ATP-grasp domain. ATP-binding positions include Lys-46, 53–55 (GRG), Glu-108, Cys-111, and Glu-116. Mg(2+) contacts are provided by Asn-208 and Asp-222. Substrate contacts are provided by residues Asn-273 and 330–332 (GIM).

It belongs to the succinate/malate CoA ligase beta subunit family. Heterotetramer of two alpha and two beta subunits. Requires Mg(2+) as cofactor.

The catalysed reaction is succinate + ATP + CoA = succinyl-CoA + ADP + phosphate. It carries out the reaction GTP + succinate + CoA = succinyl-CoA + GDP + phosphate. The protein operates within carbohydrate metabolism; tricarboxylic acid cycle; succinate from succinyl-CoA (ligase route): step 1/1. In terms of biological role, succinyl-CoA synthetase functions in the citric acid cycle (TCA), coupling the hydrolysis of succinyl-CoA to the synthesis of either ATP or GTP and thus represents the only step of substrate-level phosphorylation in the TCA. The beta subunit provides nucleotide specificity of the enzyme and binds the substrate succinate, while the binding sites for coenzyme A and phosphate are found in the alpha subunit. The polypeptide is Succinate--CoA ligase [ADP-forming] subunit beta (Acidiphilium cryptum (strain JF-5)).